The primary structure comprises 469 residues: MNPNQKIITIGSVSLTIATICFLMQIAILVTTVTLHFKQYECDSPANNQVMPCEPIIIERNITEIVYLTNTTIEKEICPKLVEYRNWSKPQCKITGFAPFSKDNSIRLSAGGDIWVTREPYVSCDPGRCYQFALGQGTTLDNKHSNDTIHDRTPHRTLLMNELGVPFHLGTRQVCIAWSSSSCHDGKAWLHVCVTGYDKNATASFIYDGRLVDSIGSWSKNILRTQESECVCINGTCTVVMTDGSASERADTKVLFIEEGKIVHISPLSGSAQHVEECSCYPRYPGVRCVCRDNWKGSNRPVVDINVKDYSIASSYVCSGLVGDTPRKNDRYSSSYCRNPNNEKGNHGVKGWAFDDGNDVWMGRTISDESRSGYETFKVIGGWSTPNSKLQINRQVIVDSDNRSGYSGIFSVEGKSCINRCFYVELIRGREQETRVWWTSNSIVVFCGTSGTYGTGSWPDGADINLMPI.

The Intravirion segment spans residues 1–9 (MNPNQKIIT). The helical transmembrane segment at 10–30 (IGSVSLTIATICFLMQIAILV) threads the bilayer. Positions 11–33 (GSVSLTIATICFLMQIAILVTTV) are involved in apical transport and lipid raft association. Topologically, residues 31 to 469 (TTVTLHFKQY…DGADINLMPI (439 aa)) are virion surface. The segment at 36-88 (HFKQYECDSPANNQVMPCEPIIIERNITEIVYLTNTTIEKEICPKLVEYRNWS) is hypervariable stalk region. Residues Asn61, Asn70, and Asn86 are each glycosylated (N-linked (GlcNAc...) asparagine; by host). The head of neuraminidase stretch occupies residues 91 to 469 (QCKITGFAPF…DGADINLMPI (379 aa)). 8 cysteine pairs are disulfide-bonded: Cys92-Cys417, Cys124-Cys129, Cys183-Cys230, Cys232-Cys237, Cys278-Cys291, Cys280-Cys289, Cys318-Cys337, and Cys421-Cys447. Position 118 (Arg118) interacts with substrate. An N-linked (GlcNAc...) asparagine; by host glycan is attached at Asn146. Catalysis depends on Asp151, which acts as the Proton donor/acceptor. Arg152 provides a ligand contact to substrate. N-linked (GlcNAc...) asparagine; by host glycosylation is found at Asn200 and Asn234. 276–277 (EE) is a substrate binding site. Arg292 provides a ligand contact to substrate. Residues Asp293, Gly297, and Asp324 each contribute to the Ca(2+) site. A substrate-binding site is contributed by Arg371. An N-linked (GlcNAc...) asparagine; by host glycan is attached at Asn402. Tyr406 acts as the Nucleophile in catalysis.

This sequence belongs to the glycosyl hydrolase 34 family. Homotetramer. The cofactor is Ca(2+). Post-translationally, N-glycosylated.

The protein localises to the virion membrane. Its subcellular location is the host apical cell membrane. It carries out the reaction Hydrolysis of alpha-(2-&gt;3)-, alpha-(2-&gt;6)-, alpha-(2-&gt;8)- glycosidic linkages of terminal sialic acid residues in oligosaccharides, glycoproteins, glycolipids, colominic acid and synthetic substrates.. Its activity is regulated as follows. Inhibited by the neuraminidase inhibitors zanamivir (Relenza) and oseltamivir (Tamiflu). These drugs interfere with the release of progeny virus from infected cells and are effective against all influenza strains. Resistance to neuraminidase inhibitors is quite rare. Catalyzes the removal of terminal sialic acid residues from viral and cellular glycoconjugates. Cleaves off the terminal sialic acids on the glycosylated HA during virus budding to facilitate virus release. Additionally helps virus spread through the circulation by further removing sialic acids from the cell surface. These cleavages prevent self-aggregation and ensure the efficient spread of the progeny virus from cell to cell. Otherwise, infection would be limited to one round of replication. Described as a receptor-destroying enzyme because it cleaves a terminal sialic acid from the cellular receptors. May facilitate viral invasion of the upper airways by cleaving the sialic acid moieties on the mucin of the airway epithelial cells. Likely to plays a role in the budding process through its association with lipid rafts during intracellular transport. May additionally display a raft-association independent effect on budding. Plays a role in the determination of host range restriction on replication and virulence. Sialidase activity in late endosome/lysosome traffic seems to enhance virus replication. This is Neuraminidase from Aves (whales).